We begin with the raw amino-acid sequence, 391 residues long: Phosphoglycerate kinase (391 aa).

Residues 21-23 (DLN), Arg-36, 59-62 (HLGR), Arg-113, and Arg-146 contribute to the substrate site. ATP is bound by residues Lys-197, Glu-319, and 345-348 (GGDT).

This sequence belongs to the phosphoglycerate kinase family. As to quaternary structure, monomer.

Its subcellular location is the cytoplasm. It catalyses the reaction (2R)-3-phosphoglycerate + ATP = (2R)-3-phospho-glyceroyl phosphate + ADP. Its pathway is carbohydrate degradation; glycolysis; pyruvate from D-glyceraldehyde 3-phosphate: step 2/5. The chain is Phosphoglycerate kinase from Shewanella putrefaciens (strain CN-32 / ATCC BAA-453).